Reading from the N-terminus, the 316-residue chain is tRNA dimethylallyltransferase (316 aa).

17 to 24 (GPTASGKT) contributes to the ATP binding site. Residue 19–24 (TASGKT) coordinates substrate. Interaction with substrate tRNA regions lie at residues 42-45 (DSAL), 166-170 (QRLSR), 247-252 (RCVGYR), and 280-287 (KRQITWLR).

This sequence belongs to the IPP transferase family. In terms of assembly, monomer. Requires Mg(2+) as cofactor.

The catalysed reaction is adenosine(37) in tRNA + dimethylallyl diphosphate = N(6)-dimethylallyladenosine(37) in tRNA + diphosphate. In terms of biological role, catalyzes the transfer of a dimethylallyl group onto the adenine at position 37 in tRNAs that read codons beginning with uridine, leading to the formation of N6-(dimethylallyl)adenosine (i(6)A). The sequence is that of tRNA dimethylallyltransferase from Escherichia coli O157:H7.